Here is a 400-residue protein sequence, read N- to C-terminus: Cytochrome b (400 aa).

A helical transmembrane segment spans residues 47–67; it reads LGSIAGIALVIQIITGVILAM. Residues H97 and H111 each contribute to the heme b site. The next 8 helical transmembrane spans lie at 98–118, 131–151, 166–186, 194–214, 247–267, 306–326, 341–361, and 368–388; these read AVGASMFFAAVYLHIARGLYY, IGIIIFLTMMATAFMGYVLPW, FSAIPLIGKSIVTWLWGGFSV, FFSLHYLLPFIIVALVMLHLV, FVGFGVYFIIFAYFIFYEPNY, LGGVLLMFGSIFVLFLLPWLD, IAFWIFMADCLLLGYLGGQPA, and ISRFAACYYFFHFLVALPLIG. Positions 198 and 212 each coordinate heme b.

Belongs to the cytochrome b family. In terms of assembly, the main subunits of complex b-c1 are: cytochrome b, cytochrome c1 and the Rieske protein. The cofactor is heme b.

The protein localises to the cell membrane. Its function is as follows. Component of the ubiquinol-cytochrome c reductase complex (complex III or cytochrome b-c1 complex), which is a respiratory chain that generates an electrochemical potential coupled to ATP synthesis. This is Cytochrome b (petB) from Rickettsia bellii (strain RML369-C).